The following is a 649-amino-acid chain: Protein PSK SIMULATOR 3 (649 aa).

Gly-2 carries the N-myristoyl glycine lipid modification. Residues 18–43 are disordered; that stretch reads SGSSVADDGREPDFGHSQPNGQTSLI.

Its subcellular location is the nucleus. Its function is as follows. Promotes plant growth, especially at the vegetative stage, probably via the regulation of phytosulfokine (PSK) signaling; PSK are peptide phytohormones acting as growth factors. Together with PSI2 and PSI3, required during vegetative growth and reproduction. May also have a function in carbohydrate metabolism. The sequence is that of Protein PSK SIMULATOR 3 from Arabidopsis thaliana (Mouse-ear cress).